Consider the following 219-residue polypeptide: uncharacterized protein (219 aa).

The next 2 helical transmembrane spans lie at 81 to 101 (VVKW…NYLI) and 168 to 188 (PIME…TALV).

Its subcellular location is the membrane. This is an uncharacterized protein from Saccharomyces cerevisiae (strain ATCC 204508 / S288c) (Baker's yeast).